We begin with the raw amino-acid sequence, 97 residues long: Large ribosomal subunit protein uL23 (97 aa).

Belongs to the universal ribosomal protein uL23 family. In terms of assembly, part of the 50S ribosomal subunit. Contacts protein L29, and trigger factor when it is bound to the ribosome.

In terms of biological role, one of the early assembly proteins it binds 23S rRNA. One of the proteins that surrounds the polypeptide exit tunnel on the outside of the ribosome. Forms the main docking site for trigger factor binding to the ribosome. The sequence is that of Large ribosomal subunit protein uL23 from Brucella anthropi (strain ATCC 49188 / DSM 6882 / CCUG 24695 / JCM 21032 / LMG 3331 / NBRC 15819 / NCTC 12168 / Alc 37) (Ochrobactrum anthropi).